Here is a 348-residue protein sequence, read N- to C-terminus: Delta(6)-protoilludene synthase 18 (348 aa).

Positions 87, 223, 227, and 231 each coordinate Mg(2+). Residues 87–91 (DEYTD) carry the DDXXD motif motif. The NSE/DTE motif motif lies at 223–231 (NDLVSYNRE). Residues Arg311 and Tyr312 each contribute to the (2E,6E)-farnesyl diphosphate site.

The protein belongs to the terpene synthase family. The cofactor is Mg(2+).

It catalyses the reaction (2E,6E)-farnesyl diphosphate = Delta(6)-protoilludene + diphosphate. In terms of biological role, terpene cyclase that catalyzes the cyclization of farnesyl diphosphate (FPP) to delta(6)-protoilludene. The polypeptide is Delta(6)-protoilludene synthase 18 (Postia placenta (strain ATCC 44394 / Madison 698-R) (Brown rot fungus)).